The sequence spans 556 residues: Methyltransferase/ribosomally synthesized type II borosin cyclic peptide precursor pgiMA1 (556 aa).

A methyltransferase domain region spans residues 1–250; it reads MSSASSDSNT…SCSTLYVPPL (250 aa). Catalysis depends on residues Arg74, Tyr78, and Tyr100. The S-adenosyl-L-methionine site is built by Tyr100, His102, Val105, Gln174, Gly212, Ser243, and Thr244. The interval 251–377 is clasp domain; the sequence is THANKFSGNM…GAVFGVMKLR (127 aa). The precursor leader stretch occupies residues 378–386; the sequence is ASEVANEQG. 10 positions are modified to N-methylaspartate: Asp421, Asp434, Asp447, Asp460, Asp473, Asp486, Asp499, Asp512, Asp525, and Asp538. Positions 543 to 556 are excised as a propeptide; it reads AVPVPDHVAGIPCM.

In the N-terminal section; belongs to the precorrin methyltransferase family. Homodimer. PgiMA1 automethylates at Asp-421, Asp-434, Asp-447, Asp-460, Asp-473, Asp-486, Asp-499, Asp-512, Asp-525 and Asp-538 before being processed, probably by the M64 family peptidase found in the genes surrounding PgiMA1, to release methylated peptides which then undergos macrocyclization with the N-terminus of the modified core peptides. Peptide backbone alpha-N-methylations change the physicochemical properties of amide bonds to provide structural constraints and other favorable characteristics including biological membrane permeability to peptides.

Its pathway is secondary metabolite biosynthesis. Fusion protein of the methyltransferase pgiM1 and 12 type II borosin core peptides; part of the gene cluster that mediates the biosynthesis of a type II borosin, a highly methylated cyclic peptide with potent biological activities. Type II borosins derive from the C-terminus of the fusion protein, and it is the same protein that methylates its own C-terminus using S-adenosyl methionine (SAM). The C-terminus is subsequently cleaved off and macrocyclized by a prolyloligopeptidase to give the final product. This Phlebiopsis gigantea (strain 11061_1 CR5-6) (White-rot fungus) protein is Methyltransferase/ribosomally synthesized type II borosin cyclic peptide precursor pgiMA1.